The following is a 500-amino-acid chain: Cytochrome P450 monooxygenase hepD (500 aa).

A helical membrane pass occupies residues 15-35; sequence WILLSLSLAFIVVYSLFYLAV. N-linked (GlcNAc...) asparagine glycosylation is found at N99, N185, N373, and N409. Position 445 (C445) interacts with heme. N482 is a glycosylation site (N-linked (GlcNAc...) asparagine).

It belongs to the cytochrome P450 family. Requires heme as cofactor.

Its subcellular location is the membrane. Its pathway is secondary metabolite biosynthesis. Its function is as follows. Cytochrome P450 monooxygenase; part of the gene cluster that mediates the biosynthesis of heptelidic acid (HA), a sesquiterpene lactone that acts as an inhibitor of glyceraldehyde-3-phosphatedehydrogenase (GAPDH) and a growth inhibitor of the salt-tolerant lactic acid bacteria in soy sauce brewing. The sequence is that of Cytochrome P450 monooxygenase hepD from Aspergillus oryzae (strain ATCC 42149 / RIB 40) (Yellow koji mold).